We begin with the raw amino-acid sequence, 329 residues long: Short-chain dehydrogenase/reductase tropG (329 aa).

Residues Lys-57, Asp-86, Asn-113, Tyr-203, and Lys-207 each contribute to the NADP(+) site. Tyr-203 functions as the Proton acceptor in the catalytic mechanism. Lys-207 functions as the Lowers pKa of active site Tyr in the catalytic mechanism.

This sequence belongs to the short-chain dehydrogenases/reductases (SDR) family.

It participates in secondary metabolite biosynthesis. Its function is as follows. Short-chain dehydrogenase/reductase; part of the gene cluster that mediates the biosynthesis of the tropolone class of fungal maleic anhydrides. The pathway begins with the synthesis of 3-methylorcinaldehyde by the non-reducing polyketide synthase (PKS) tropA. 3-methylorcinaldehyde is the substrate for the FAD-dependent monooxygenase tropB to yield a dearomatized hydroxycyclohexadione. The 2-oxoglutarate-dependent dioxygenase tropC then performs the oxidative ring expansion to provide the first tropolone metabolite stipitaldehyde. Trop D converts stipitaldehyde into stipitacetal which is in turn converted to stipitalide by the short-chain dehydrogenase/reductase tropE. The next steps involve tropF, tropG, tropH, tropI and tropJ to form successive tropolone maleic anhydrides including stipitaldehydic, stipitatonic and stipitatic acids. This is Short-chain dehydrogenase/reductase tropG from Talaromyces stipitatus (strain ATCC 10500 / CBS 375.48 / QM 6759 / NRRL 1006) (Penicillium stipitatum).